Here is a 152-residue protein sequence, read N- to C-terminus: Large ribosomal subunit protein eL32 (152 aa).

The protein belongs to the eukaryotic ribosomal protein eL32 family.

In Pyrobaculum aerophilum (strain ATCC 51768 / DSM 7523 / JCM 9630 / CIP 104966 / NBRC 100827 / IM2), this protein is Large ribosomal subunit protein eL32 (rpl32e).